Here is a 55-residue protein sequence, read N- to C-terminus: Neurotoxin X-29S (55 aa).

A signal peptide spans 1–23; that stretch reads MKIFFAVLVILVLFSMLIWTAYG. Intrachain disulfides connect cysteine 30-cysteine 45, cysteine 36-cysteine 50, and cysteine 39-cysteine 53.

Expressed by the venom gland.

Its subcellular location is the secreted. This Olivierus martensii (Manchurian scorpion) protein is Neurotoxin X-29S.